We begin with the raw amino-acid sequence, 385 residues long: MLWPASEEFAALCRTQLELVVNSLGASSLAVYLSETLNDSPSWSPVAVYPEAASLLSLAIPPTLPPPTQVPETSLSHYPQQVVSSLANQLILPLMYQNWVLGVLVAQRQHRPWLAAEQAQLQQVAQTLAIACVLDQRQQWLSHSPAQPLDQRQQRFDDLLHQLRNPVAAIRTFVKLLLKRLEPDHKGRPLAEGIAKETERLMALLEDYRQQRNDIPALTGSQPLPLAGKPLDLAETLLPLISAAQARAEMEGKTFVVEIPPQLPPIWLEERVLQEVVGNLLDNAFKYTPKGGTIGLRLMLSSPALELTVWDTGCGIPKEAQPRLFERGYRGVQADSGIEGSGLGLAIAQDLLRPYGLSLRVTSPYAGDRGTAFTLAIPWQMKVEP.

A GAF domain is found at 11–131; the sequence is ALCRTQLELV…QQVAQTLAIA (121 aa). Cys13 provides a ligand contact to [3Fe-4S] cluster. Residues 142–270 are DHp domain, may sense NaCl; it reads SHSPAQPLDQ…PQLPPIWLEE (129 aa). Positions 158-381 constitute a Histidine kinase domain; that stretch reads DLLHQLRNPV…AFTLAIPWQM (224 aa). His161 is subject to Phosphohistidine; by autocatalysis.

This sequence belongs to the chloroplast sensor kinase protein family. As to quaternary structure, hexamers; upon treatment with 0.5 M NaCl only tetramers are seen. The tetramers are probably inactive. It depends on [3Fe-4S] cluster as a cofactor. In terms of processing, autophosphorylates, possibly on His-161.

The catalysed reaction is ATP + protein L-histidine = ADP + protein N-phospho-L-histidine.. Member of 2 two-component regulatory system(s) Hik2/Rre1 and Hik2/RppA. Transduces PQ (plastoquinone) redox signals to photosystem gene expression machinery during the adjustment of photosystem stoichiometry. Reduced PQ suppresses its autophosphorylation activity (i.e. kinase activity is higher under oxidizing conditions). As part of a two-component regulatory system with Rre1, controls expression of sigB and several other genes in response to hyperosmotic stress. May transfer phosphate to RppA in a possible Hik2/RppA two-component system. The protein is Sensor histidine kinase Hik2 of Thermosynechococcus vestitus (strain NIES-2133 / IAM M-273 / BP-1).